We begin with the raw amino-acid sequence, 268 residues long: Hydroxyethylthiazole kinase (268 aa).

A substrate-binding site is contributed by Met-45. Arg-121 and Thr-167 together coordinate ATP. Residue Gly-194 participates in substrate binding.

This sequence belongs to the Thz kinase family. The cofactor is Mg(2+).

It carries out the reaction 5-(2-hydroxyethyl)-4-methylthiazole + ATP = 4-methyl-5-(2-phosphooxyethyl)-thiazole + ADP + H(+). It functions in the pathway cofactor biosynthesis; thiamine diphosphate biosynthesis; 4-methyl-5-(2-phosphoethyl)-thiazole from 5-(2-hydroxyethyl)-4-methylthiazole: step 1/1. Its function is as follows. Catalyzes the phosphorylation of the hydroxyl group of 4-methyl-5-beta-hydroxyethylthiazole (THZ). The protein is Hydroxyethylthiazole kinase of Bacillus cereus (strain Q1).